We begin with the raw amino-acid sequence, 287 residues long: Methylamine utilization ferredoxin-type protein MauN (287 aa).

4Fe-4S ferredoxin-type domains lie at 218–248 and 251–280; these read RVAA…PALK and GSTL…MTMR. Residues cysteine 227, cysteine 230, cysteine 233, cysteine 237, cysteine 260, cysteine 263, cysteine 266, and cysteine 270 each contribute to the [4Fe-4S] cluster site.

It functions in the pathway one-carbon metabolism; methylamine degradation. Its function is as follows. Involved in electron transfer. This Methylorubrum extorquens (strain ATCC 14718 / DSM 1338 / JCM 2805 / NCIMB 9133 / AM1) (Methylobacterium extorquens) protein is Methylamine utilization ferredoxin-type protein MauN (mauN).